A 42-amino-acid chain; its full sequence is Hemoglobin subunit beta-A (42 aa).

Positions 2 to 42 (EWTDAERSAILSLWGKIDTDELGPALLARLXLVXXXTQRYF) constitute a Globin domain.

Belongs to the globin family. As to quaternary structure, heterotetramer of two alpha chains and two beta chains. Red blood cells.

In terms of biological role, involved in oxygen transport from gills to the various peripheral tissues. The chain is Hemoglobin subunit beta-A from Catostomus clarkii (Desert sucker).